The following is a 405-amino-acid chain: Putative aminotransferase AatC (405 aa).

K238 bears the N6-(pyridoxal phosphate)lysine mark.

It belongs to the class-I pyridoxal-phosphate-dependent aminotransferase family. Homodimer. Pyridoxal 5'-phosphate serves as cofactor.

Its subcellular location is the cytoplasm. This is Putative aminotransferase AatC (aatC) from Rhizobium meliloti (strain 1021) (Ensifer meliloti).